The chain runs to 363 residues: NADH-quinone oxidoreductase subunit H (363 aa).

Transmembrane regions (helical) follow at residues valine 29 to tryptophan 49, glycine 62 to phenylalanine 82, valine 94 to valine 114, valine 127 to glycine 147, valine 166 to serine 186, phenylalanine 202 to valine 222, isoleucine 239 to leucine 257, isoleucine 264 to valine 286, leucine 293 to alanine 313, and phenylalanine 339 to isoleucine 359.

Belongs to the complex I subunit 1 family. NDH-1 is composed of 14 different subunits. Subunits NuoA, H, J, K, L, M, N constitute the membrane sector of the complex.

Its subcellular location is the cell inner membrane. It catalyses the reaction a quinone + NADH + 5 H(+)(in) = a quinol + NAD(+) + 4 H(+)(out). In terms of biological role, NDH-1 shuttles electrons from NADH, via FMN and iron-sulfur (Fe-S) centers, to quinones in the respiratory chain. The immediate electron acceptor for the enzyme in this species is believed to be ubiquinone. Couples the redox reaction to proton translocation (for every two electrons transferred, four hydrogen ions are translocated across the cytoplasmic membrane), and thus conserves the redox energy in a proton gradient. This subunit may bind ubiquinone. This is NADH-quinone oxidoreductase subunit H from Xylella fastidiosa (strain M12).